Reading from the N-terminus, the 172-residue chain is Crossover junction endodeoxyribonuclease RuvC (172 aa).

Residues Asp11, Glu71, and Asp143 contribute to the active site. Positions 11, 71, and 143 each coordinate Mg(2+).

This sequence belongs to the RuvC family. As to quaternary structure, homodimer which binds Holliday junction (HJ) DNA. The HJ becomes 2-fold symmetrical on binding to RuvC with unstacked arms; it has a different conformation from HJ DNA in complex with RuvA. In the full resolvosome a probable DNA-RuvA(4)-RuvB(12)-RuvC(2) complex forms which resolves the HJ. It depends on Mg(2+) as a cofactor.

It localises to the cytoplasm. It carries out the reaction Endonucleolytic cleavage at a junction such as a reciprocal single-stranded crossover between two homologous DNA duplexes (Holliday junction).. The RuvA-RuvB-RuvC complex processes Holliday junction (HJ) DNA during genetic recombination and DNA repair. Endonuclease that resolves HJ intermediates. Cleaves cruciform DNA by making single-stranded nicks across the HJ at symmetrical positions within the homologous arms, yielding a 5'-phosphate and a 3'-hydroxyl group; requires a central core of homology in the junction. The consensus cleavage sequence is 5'-(A/T)TT(C/G)-3'. Cleavage occurs on the 3'-side of the TT dinucleotide at the point of strand exchange. HJ branch migration catalyzed by RuvA-RuvB allows RuvC to scan DNA until it finds its consensus sequence, where it cleaves and resolves the cruciform DNA. This Brucella anthropi (strain ATCC 49188 / DSM 6882 / CCUG 24695 / JCM 21032 / LMG 3331 / NBRC 15819 / NCTC 12168 / Alc 37) (Ochrobactrum anthropi) protein is Crossover junction endodeoxyribonuclease RuvC.